The chain runs to 308 residues: D-alanine--D-alanine ligase (308 aa).

An ATP-grasp domain is found at 103–302; the sequence is KFVFRAAGLP…YGELVSWMVE (200 aa). 130–184 provides a ligand contact to ATP; the sequence is MDPPYVIKPVSEGSSVGVFIVRAGDNRPPAELTSAEWNLGDEVMAERYIAGRELT. Mg(2+) contacts are provided by aspartate 252, glutamate 269, and asparagine 271.

It belongs to the D-alanine--D-alanine ligase family. Requires Mg(2+) as cofactor. The cofactor is Mn(2+).

The protein localises to the cytoplasm. It catalyses the reaction 2 D-alanine + ATP = D-alanyl-D-alanine + ADP + phosphate + H(+). Its pathway is cell wall biogenesis; peptidoglycan biosynthesis. Its function is as follows. Cell wall formation. This chain is D-alanine--D-alanine ligase, found in Parvibaculum lavamentivorans (strain DS-1 / DSM 13023 / NCIMB 13966).